We begin with the raw amino-acid sequence, 446 residues long: MRTLNTSAMDGTGLVVERDFSVRILTACFLSLLILSTLLGNTLVCAAVIRFRHLRSKVTNFFVISLAVSDLLVAVLVMPWKAVAEIAGFWPFGSFCNIWVAFDIMCSTASILNLCVISVDRYWAISSPFRYERKMTPKAAFILISVAWTLSVLISFIPVQLSWHKAKPTSPSDGNATSLAETIDNCDSSLSRTYAISSSVISFYIPVAIMIVTYTRIYRIAQKQIRRIAALERAAVHAKNCQTTTGNGKPVECSQPESSFKMSFKRETKVLKTLSVIMGVFVCCWLPFFILNCILPFCGSGETQPFCIDSITFDVFVWFGWANSSLNPIIYAFNADFRKAFSTLLGCYRLCPATNNAIETVSINNNGAAMFSSHHEPRGSISKECNLVYLIPHAVGSSEDLKKEEAAGIARPLEKLSPALSVILDYDTDVSLEKIQPITQNGQHPT.

At M1–R23 the chain is on the extracellular side. N5 carries N-linked (GlcNAc...) asparagine glycosylation. A helical transmembrane segment spans residues I24–I49. Residues R50 to N60 lie on the Cytoplasmic side of the membrane. A helical membrane pass occupies residues F61–A87. Over G88–C96 the chain is Extracellular. The cysteines at positions 96 and 186 are disulfide-linked. Residues N97–V119 traverse the membrane as a helical segment. Residues D120–K138 are Cytoplasmic-facing. A helical membrane pass occupies residues A139–W163. Residues H164–R192 lie on the Extracellular side of the membrane. An N-linked (GlcNAc...) asparagine glycan is attached at N175. The chain crosses the membrane as a helical span at residues T193–Y218. The Cytoplasmic portion of the chain corresponds to R219–K272. Residues T273 to G299 traverse the membrane as a helical segment. Topologically, residues S300–T312 are extracellular. A helical transmembrane segment spans residues F313 to F337. Over R338 to T446 the chain is Cytoplasmic. 2 S-palmitoyl cysteine lipidation sites follow: C347 and C351.

Belongs to the G-protein coupled receptor 1 family. In terms of assembly, interacts with DNAJC14 via its C-terminus. Interacts with DRD2. Interacts with DORIP1.

It localises to the cell membrane. The protein localises to the endoplasmic reticulum membrane. Its subcellular location is the cell projection. The protein resides in the cilium membrane. It is found in the dendrite. It localises to the dendritic spine. In terms of biological role, dopamine receptor whose activity is mediated by G proteins which activate adenylyl cyclase. This chain is D(1A) dopamine receptor (DRD1), found in Macaca mulatta (Rhesus macaque).